A 146-amino-acid polypeptide reads, in one-letter code: MTIKLHDLRPAPGSKTPRTRVGRGEGSKGKTAGRGTKGTKARKQVPTTFEGGQMPIHMRLPKLKGFRNRFRTEYEIVNVGDIARLFPEGGTVGVDELVAKGAVRKNSLVKVLGDGKLTVKVDITAHKFSGSAREQITAAGGSVTEL.

Residues Met1–Met54 are disordered.

Belongs to the universal ribosomal protein uL15 family. Part of the 50S ribosomal subunit.

In terms of biological role, binds to the 23S rRNA. The sequence is that of Large ribosomal subunit protein uL15 from Mycobacterium ulcerans (strain Agy99).